A 509-amino-acid polypeptide reads, in one-letter code: 2-isopropylmalate synthase (509 aa).

The 263-residue stretch at 5-267 (IQIFDTTLRD…QTALNLEETK (263 aa)) folds into the Pyruvate carboxyltransferase domain. Mn(2+) contacts are provided by aspartate 14, histidine 202, histidine 204, and asparagine 238. Positions 391-509 (KLETLQLQYV…AAENVEKVGN (119 aa)) are regulatory domain.

The protein belongs to the alpha-IPM synthase/homocitrate synthase family. LeuA type 1 subfamily. As to quaternary structure, homodimer. Mn(2+) is required as a cofactor.

It is found in the cytoplasm. The catalysed reaction is 3-methyl-2-oxobutanoate + acetyl-CoA + H2O = (2S)-2-isopropylmalate + CoA + H(+). Its pathway is amino-acid biosynthesis; L-leucine biosynthesis; L-leucine from 3-methyl-2-oxobutanoate: step 1/4. Catalyzes the condensation of the acetyl group of acetyl-CoA with 3-methyl-2-oxobutanoate (2-ketoisovalerate) to form 3-carboxy-3-hydroxy-4-methylpentanoate (2-isopropylmalate). This chain is 2-isopropylmalate synthase, found in Staphylococcus aureus (strain USA300).